The primary structure comprises 1201 residues: Period circadian protein homolog 3 (1201 aa).

A disordered region spans residues 1–50 (MPRGEAPGPGRRGAKDEALGEESGERWSPEFHLQRKLADSSHSEQQDRNR). The span at 13–50 (GAKDEALGEESGERWSPEFHLQRKLADSSHSEQQDRNR) shows a compositional bias: basic and acidic residues. A Nuclear export signal 1 motif is present at residues 55-64 (LIMVVQEMKK). PAS domains lie at 121–188 (IASE…RAQL) and 262–328 (YEAP…KVLK). A PAC domain is found at 337–380 (HSPIRFCTQNGDYIILDSSWSSFVNPWSRKISFIIGRHKVRTSP). A Nuclear export signal 3 motif is present at residues 403 to 412 (LQEQIYKLLL). The segment at 555-760 (LKRKCISCTN…SSSNTGSGPR (206 aa)) is CSNK1E binding domain. Disordered stretches follow at residues 717 to 788 (YSYF…FPPA) and 881 to 923 (PSMS…RSSS). The span at 721–731 (QGDSTSKQTRS) shows a compositional bias: polar residues. A Nuclear localization signal motif is present at residues 729–745 (TRSAGCRKGKHKRKKLP). Basic residues predominate over residues 733–743 (GCRKGKHKRKK). Composition is skewed to low complexity over residues 767–783 (AQPC…TSSP) and 881–890 (PSMSSAMSPT). The span at 900–911 (QRREEEKWEAQS) shows a compositional bias: basic and acidic residues. Residue S919 is modified to Phosphoserine. The short motif at 925 to 932 (LQLNLLQE) is the Nuclear export signal 2 element. The tract at residues 952 to 1067 (TEYCVTGNNG…GSAASGSSDS (116 aa)) is disordered. 4 stretches are compositionally biased toward polar residues: residues 957-976 (TGNN…STGS), 983-994 (SHPTASALSTGS), 1001-1012 (SHPTASALSTGS), and 1035-1050 (TPSH…GSPP). 5 repeat units span residues 965-982 (SPAT…RENP), 983-1000 (SHPT…MKNP), 1001-1018 (SHPT…MKNP), 1019-1036 (SHPT…SRTP), and 1037-1054 (SHPT…SESP). Residues 965-1054 (SPATTGALST…STGSPPSESP (90 aa)) are 5 X 18 AA tandem repeats of S-[HP]-[AP]-T-[AT]-[GST]-[ATV]-L-S-[MT]-G-[LS]-P-P-[MRS]-[EKR]-[NST]-P. A Phosphoserine modification is found at S994. The residue at position 1053 (S1053) is a Phosphoserine. Over residues 1053-1067 (SPSRTGSAASGSSDS) the composition is skewed to low complexity. Positions 1123–1201 (ERVKEVVLKE…CGQVLVEDSC (79 aa)) are CRY binding domain.

Homodimer. Component of the circadian core oscillator, which includes the CRY proteins, CLOCK or NPAS2, BMAL1 or BMAL2, CSNK1D and/or CSNK1E, TIMELESS and the PER proteins. Interacts directly with PER1, PER2, CRY1, CRY2, and TIMELESS; interaction with CRY1 and CRY2 is weak and not rhythmic. Interacts with FBXW11 and BTRC. In terms of processing, phosphorylation by CSNK1E is weak and appears to require association with PER1 and translocation to the nucleus. Post-translationally, ubiquitinated.

Its subcellular location is the cytoplasm. It localises to the nucleus. Functionally, originally described as a core component of the circadian clock. The circadian clock, an internal time-keeping system, regulates various physiological processes through the generation of approximately 24 hour circadian rhythms in gene expression, which are translated into rhythms in metabolism and behavior. It is derived from the Latin roots 'circa' (about) and 'diem' (day) and acts as an important regulator of a wide array of physiological functions including metabolism, sleep, body temperature, blood pressure, endocrine, immune, cardiovascular, and renal function. Consists of two major components: the central clock, residing in the suprachiasmatic nucleus (SCN) of the brain, and the peripheral clocks that are present in nearly every tissue and organ system. Both the central and peripheral clocks can be reset by environmental cues, also known as Zeitgebers (German for 'timegivers'). The predominant Zeitgeber for the central clock is light, which is sensed by retina and signals directly to the SCN. The central clock entrains the peripheral clocks through neuronal and hormonal signals, body temperature and feeding-related cues, aligning all clocks with the external light/dark cycle. Circadian rhythms allow an organism to achieve temporal homeostasis with its environment at the molecular level by regulating gene expression to create a peak of protein expression once every 24 hours to control when a particular physiological process is most active with respect to the solar day. Transcription and translation of core clock components (CLOCK, NPAS2, BMAL1, BMAL2, PER1, PER2, PER3, CRY1 and CRY2) plays a critical role in rhythm generation, whereas delays imposed by post-translational modifications (PTMs) are important for determining the period (tau) of the rhythms (tau refers to the period of a rhythm and is the length, in time, of one complete cycle). A diurnal rhythm is synchronized with the day/night cycle, while the ultradian and infradian rhythms have a period shorter and longer than 24 hours, respectively. Disruptions in the circadian rhythms contribute to the pathology of cardiovascular diseases, cancer, metabolic syndromes and aging. A transcription/translation feedback loop (TTFL) forms the core of the molecular circadian clock mechanism. Transcription factors, CLOCK or NPAS2 and BMAL1 or BMAL2, form the positive limb of the feedback loop, act in the form of a heterodimer and activate the transcription of core clock genes and clock-controlled genes (involved in key metabolic processes), harboring E-box elements (5'-CACGTG-3') within their promoters. The core clock genes: PER1/2/3 and CRY1/2 which are transcriptional repressors form the negative limb of the feedback loop and interact with the CLOCK|NPAS2-BMAL1|BMAL2 heterodimer inhibiting its activity and thereby negatively regulating their own expression. This heterodimer also activates nuclear receptors NR1D1, NR1D2, RORA, RORB and RORG, which form a second feedback loop and which activate and repress BMAL1 transcription, respectively. Has a redundant role with the other PER proteins PER1 and PER2 and is not essential for the circadian rhythms maintenance. In contrast, plays an important role in sleep-wake timing and sleep homeostasis probably through the transcriptional regulation of sleep homeostasis-related genes, without influencing circadian parameters. Can bind heme. This is Period circadian protein homolog 3 (PER3) from Homo sapiens (Human).